Here is a 1407-residue protein sequence, read N- to C-terminus: DNA-directed RNA polymerase subunit beta' (1407 aa).

Residues C70, C72, C85, and C88 each coordinate Zn(2+). Residues D458, D460, and D462 each coordinate Mg(2+). Zn(2+) is bound by residues C814, C888, C895, and C898.

This sequence belongs to the RNA polymerase beta' chain family. The RNAP catalytic core consists of 2 alpha, 1 beta, 1 beta' and 1 omega subunit. When a sigma factor is associated with the core the holoenzyme is formed, which can initiate transcription. Mg(2+) serves as cofactor. The cofactor is Zn(2+).

It carries out the reaction RNA(n) + a ribonucleoside 5'-triphosphate = RNA(n+1) + diphosphate. Functionally, DNA-dependent RNA polymerase catalyzes the transcription of DNA into RNA using the four ribonucleoside triphosphates as substrates. This chain is DNA-directed RNA polymerase subunit beta', found in Leptothrix cholodnii (strain ATCC 51168 / LMG 8142 / SP-6) (Leptothrix discophora (strain SP-6)).